Reading from the N-terminus, the 1896-residue chain is von Willebrand factor A domain-containing protein 8 (1896 aa).

A mitochondrion-targeting transit peptide spans 1-18 (MHSRILFKGTAAAVAARR). 439–446 (GAKGCGKS) lines the ATP pocket. Residues 1536 to 1564 (GLDVSSPKHGKIDAKNAPHVGGNQWAGGT) form a disordered region. Positions 1705-1887 (RLRVLADVSG…KEIPQILQQI (183 aa)) constitute a VWFA domain.

As to quaternary structure, monomer.

It is found in the mitochondrion. In terms of biological role, exhibits ATPase activity in vitro. The polypeptide is von Willebrand factor A domain-containing protein 8 (vwa8) (Danio rerio (Zebrafish)).